We begin with the raw amino-acid sequence, 154 residues long: UPF0225 protein SG1365 (154 aa).

This sequence belongs to the UPF0225 family.

This is UPF0225 protein SG1365 from Sodalis glossinidius (strain morsitans).